A 328-amino-acid chain; its full sequence is Protein chibby homolog 2 (328 aa).

A disordered region spans residues 180 to 231; it reads NKGASSVQKDTENTTAAGEGSLGPTCQEEHDAKEESTTPTQNDTKIAPSTED. Polar residues predominate over residues 182 to 195; that stretch reads GASSVQKDTENTTA. Over residues 206 to 215 the composition is skewed to basic and acidic residues; the sequence is QEEHDAKEES. Residues 259–307 adopt a coiled-coil conformation; the sequence is RESLHALQDESKFFQEEYKKLKLQLNNVKNTVSDITTQMEMLEKELIAI.

It belongs to the chibby family. SPERT subfamily.

This chain is Protein chibby homolog 2 (CBY2), found in Gallus gallus (Chicken).